The chain runs to 137 residues: Large ribosomal subunit protein uL16 (137 aa).

A compositionally biased stretch (basic residues) spans 1 to 17 (MLQPKRTKFRKTHKGRN). Residues 1–23 (MLQPKRTKFRKTHKGRNRGLAQN) are disordered.

It belongs to the universal ribosomal protein uL16 family. In terms of assembly, part of the 50S ribosomal subunit.

Its function is as follows. Binds 23S rRNA and is also seen to make contacts with the A and possibly P site tRNAs. The protein is Large ribosomal subunit protein uL16 of Pseudoalteromonas translucida (strain TAC 125).